Consider the following 360-residue polypeptide: Histidinol-phosphate aminotransferase (360 aa).

Residue lysine 211 is modified to N6-(pyridoxal phosphate)lysine.

The protein belongs to the class-II pyridoxal-phosphate-dependent aminotransferase family. Histidinol-phosphate aminotransferase subfamily. As to quaternary structure, homodimer. Pyridoxal 5'-phosphate serves as cofactor.

The enzyme catalyses L-histidinol phosphate + 2-oxoglutarate = 3-(imidazol-4-yl)-2-oxopropyl phosphate + L-glutamate. It functions in the pathway amino-acid biosynthesis; L-histidine biosynthesis; L-histidine from 5-phospho-alpha-D-ribose 1-diphosphate: step 7/9. In Cronobacter sakazakii (strain ATCC BAA-894) (Enterobacter sakazakii), this protein is Histidinol-phosphate aminotransferase.